The sequence spans 378 residues: 3-dehydroquinate synthase (378 aa).

NAD(+) is bound by residues 115–119 (GVVGD), 139–140 (TS), lysine 152, and lysine 161. Glutamate 194, histidine 256, and histidine 275 together coordinate Zn(2+).

Belongs to the sugar phosphate cyclases superfamily. Dehydroquinate synthase family. Co(2+) is required as a cofactor. The cofactor is Zn(2+). Requires NAD(+) as cofactor.

It is found in the cytoplasm. It catalyses the reaction 7-phospho-2-dehydro-3-deoxy-D-arabino-heptonate = 3-dehydroquinate + phosphate. Its pathway is metabolic intermediate biosynthesis; chorismate biosynthesis; chorismate from D-erythrose 4-phosphate and phosphoenolpyruvate: step 2/7. Functionally, catalyzes the conversion of 3-deoxy-D-arabino-heptulosonate 7-phosphate (DAHP) to dehydroquinate (DHQ). This Brucella suis (strain ATCC 23445 / NCTC 10510) protein is 3-dehydroquinate synthase.